The following is a 333-amino-acid chain: DNA-directed RNA polymerase subunit alpha (333 aa).

The segment at 1–234 (MQISVNEFLT…QQLAAFVDLK (234 aa)) is alpha N-terminal domain (alpha-NTD). The alpha C-terminal domain (alpha-CTD) stretch occupies residues 248–333 (IDPILLRPVD…SLKKDDKATA (86 aa)).

The protein belongs to the RNA polymerase alpha chain family. Homodimer. The RNAP catalytic core consists of 2 alpha, 1 beta, 1 beta' and 1 omega subunit. When a sigma factor is associated with the core the holoenzyme is formed, which can initiate transcription.

It carries out the reaction RNA(n) + a ribonucleoside 5'-triphosphate = RNA(n+1) + diphosphate. Functionally, DNA-dependent RNA polymerase catalyzes the transcription of DNA into RNA using the four ribonucleoside triphosphates as substrates. The polypeptide is DNA-directed RNA polymerase subunit alpha (Pseudomonas syringae pv. tomato (strain ATCC BAA-871 / DC3000)).